A 276-amino-acid chain; its full sequence is Large ribosomal subunit protein uL2 (276 aa).

Residues 224–265 (GTAMNPIDHPHGGGEGKNFGKHPVSPWGVQTKGKRTRSNKRT) are disordered.

This sequence belongs to the universal ribosomal protein uL2 family. As to quaternary structure, part of the 50S ribosomal subunit. Forms a bridge to the 30S subunit in the 70S ribosome.

In terms of biological role, one of the primary rRNA binding proteins. Required for association of the 30S and 50S subunits to form the 70S ribosome, for tRNA binding and peptide bond formation. It has been suggested to have peptidyltransferase activity; this is somewhat controversial. Makes several contacts with the 16S rRNA in the 70S ribosome. The polypeptide is Large ribosomal subunit protein uL2 (Blochmanniella floridana).